The primary structure comprises 97 residues: Co-chaperonin GroES (97 aa).

The protein belongs to the GroES chaperonin family. In terms of assembly, heptamer of 7 subunits arranged in a ring. Interacts with the chaperonin GroEL.

It localises to the cytoplasm. Together with the chaperonin GroEL, plays an essential role in assisting protein folding. The GroEL-GroES system forms a nano-cage that allows encapsulation of the non-native substrate proteins and provides a physical environment optimized to promote and accelerate protein folding. GroES binds to the apical surface of the GroEL ring, thereby capping the opening of the GroEL channel. The polypeptide is Co-chaperonin GroES (Pseudomonas putida (Arthrobacter siderocapsulatus)).